A 144-amino-acid polypeptide reads, in one-letter code: Ribosomal RNA large subunit methyltransferase H (144 aa).

S-adenosyl-L-methionine-binding positions include Gly92 and 111–116; that span reads LSPMTF.

This sequence belongs to the RNA methyltransferase RlmH family. As to quaternary structure, homodimer.

Its subcellular location is the cytoplasm. The catalysed reaction is pseudouridine(1915) in 23S rRNA + S-adenosyl-L-methionine = N(3)-methylpseudouridine(1915) in 23S rRNA + S-adenosyl-L-homocysteine + H(+). Its function is as follows. Specifically methylates the pseudouridine at position 1915 (m3Psi1915) in 23S rRNA. The chain is Ribosomal RNA large subunit methyltransferase H from Synechococcus sp. (strain CC9311).